Consider the following 428-residue polypeptide: Ribulose bisphosphate carboxylase (428 aa).

K151 acts as the Proton acceptor in catalysis. K153 lines the substrate pocket. Mg(2+) contacts are provided by K177, D179, and E180. K177 is modified (N6-carboxylysine). Residue H270 is the Proton acceptor of the active site. Residues R271, H303, 354 to 356 (SGG), and 376 to 379 (QFGG) contribute to the substrate site.

The protein belongs to the RuBisCO large chain family. Type III subfamily. Homodimer or homodecamer. In contrast to form I RuBisCO, the form III RuBisCO is composed solely of large subunits. Requires Mg(2+) as cofactor.

The catalysed reaction is 2 (2R)-3-phosphoglycerate + 2 H(+) = D-ribulose 1,5-bisphosphate + CO2 + H2O. It catalyses the reaction D-ribulose 1,5-bisphosphate + O2 = 2-phosphoglycolate + (2R)-3-phosphoglycerate + 2 H(+). Its function is as follows. Catalyzes the addition of molecular CO(2) and H(2)O to ribulose 1,5-bisphosphate (RuBP), generating two molecules of 3-phosphoglycerate (3-PGA). Functions in an archaeal AMP degradation pathway, together with AMP phosphorylase and R15P isomerase. This chain is Ribulose bisphosphate carboxylase, found in Methanosarcina mazei (strain ATCC BAA-159 / DSM 3647 / Goe1 / Go1 / JCM 11833 / OCM 88) (Methanosarcina frisia).